The following is a 127-amino-acid chain: Large-conductance mechanosensitive channel (127 aa).

Transmembrane regions (helical) follow at residues 9–29 (EFAMRGNVIDLAVAVVMGVAF), 32–52 (IVTALVDGIIMPCVGLLLGGI), and 75–95 (VIDFIIVAFAIFVLIKLINLL).

The protein belongs to the MscL family. In terms of assembly, homopentamer.

The protein resides in the cell inner membrane. In terms of biological role, channel that opens in response to stretch forces in the membrane lipid bilayer. May participate in the regulation of osmotic pressure changes within the cell. This Legionella pneumophila (strain Paris) protein is Large-conductance mechanosensitive channel.